The primary structure comprises 543 residues: Chaperonin GroEL 2 (543 aa).

ATP is bound by residues 29–32, 86–90, Gly-413, 479–481, and Asp-495; these read TLGP, DGTTT, and NAA.

This sequence belongs to the chaperonin (HSP60) family. In terms of assembly, forms a cylinder of 14 subunits composed of two heptameric rings stacked back-to-back. Interacts with the co-chaperonin GroES.

Its subcellular location is the cytoplasm. The enzyme catalyses ATP + H2O + a folded polypeptide = ADP + phosphate + an unfolded polypeptide.. Functionally, together with its co-chaperonin GroES, plays an essential role in assisting protein folding. The GroEL-GroES system forms a nano-cage that allows encapsulation of the non-native substrate proteins and provides a physical environment optimized to promote and accelerate protein folding. The polypeptide is Chaperonin GroEL 2 (Synechococcus sp. (strain CC9311)).